The sequence spans 843 residues: Protein PLASTID MOVEMENT IMPAIRED 1 (843 aa).

Over residues 30 to 58 (PQVSVGNRRTNSLALPRSSVPSLVTSADE) the composition is skewed to polar residues. 2 disordered regions span residues 30 to 65 (PQVS…ARAE) and 88 to 116 (LEVE…SGVK). The region spanning 131 to 284 (LVRIGMQKLS…ELALKLGFQI (154 aa)) is the C2 NT-type domain. 2 disordered regions span residues 300–412 (FGMK…GTIG) and 450–472 (MMKD…EEEQ). Positions 307 to 336 (KPKNFANSFGRKQSKTSFSVPSPKMTSRSE) are enriched in polar residues. Phosphoserine is present on residues serine 314 and serine 328. Positions 365–381 (PEEKPVQKNDKPEQRAE) are enriched in basic and acidic residues. Threonine 404 bears the Phosphothreonine mark. A Phosphoserine modification is found at serine 407. Threonine 410 is subject to Phosphothreonine. The span at 456-472 (DGGDGETESQRLDEEEQ) shows a compositional bias: acidic residues. Residue serine 507 is modified to Phosphoserine.

As to expression, expressed in leaves, stems, cauline leaves, and flowers but not in roots. Present in leaves in both mesophyll and pavement cells.

It is found in the cytoplasm. Functionally, necessary for chloroplast and nuclear photorelocation movements via the regulation of chloroplast-actin (cp-actin) filaments in mesophyll cells, and together with PMIR1, in pavement cells. Required component for both the low- and high-light-dependent chloroplast movement responses via an abscisic acid (ABA) pathway. Involved in the ABA response pathway during seed germination. Modulates ABA accumulation during periods of water deficit at the seedling stage. This Arabidopsis thaliana (Mouse-ear cress) protein is Protein PLASTID MOVEMENT IMPAIRED 1.